The sequence spans 293 residues: uncharacterized protein (293 aa).

This sequence belongs to the TolB family.

This is an uncharacterized protein from Agrobacterium fabrum (strain C58 / ATCC 33970) (Agrobacterium tumefaciens (strain C58)).